A 241-amino-acid polypeptide reads, in one-letter code: 3-oxoacyl-[acyl-carrier-protein] reductase FabG (241 aa).

Residues 13–16 (GASG), Ser-38, 57–58 (KV), and Asn-83 contribute to the NADP(+) site. A substrate-binding site is contributed by Ser-135. Residue Tyr-148 is the Proton acceptor of the active site. Residues 148–152 (YCASK) and Ile-181 each bind NADP(+).

It belongs to the short-chain dehydrogenases/reductases (SDR) family. In terms of assembly, homotetramer.

The enzyme catalyses a (3R)-hydroxyacyl-[ACP] + NADP(+) = a 3-oxoacyl-[ACP] + NADPH + H(+). It participates in lipid metabolism; fatty acid biosynthesis. Its function is as follows. Catalyzes the NADPH-dependent reduction of beta-ketoacyl-ACP substrates to beta-hydroxyacyl-ACP products, the first reductive step in the elongation cycle of fatty acid biosynthesis. This chain is 3-oxoacyl-[acyl-carrier-protein] reductase FabG (fabG), found in Rickettsia bellii (strain RML369-C).